A 356-amino-acid chain; its full sequence is Glucose-1-phosphate thymidylyltransferase (356 aa).

Mg(2+)-binding residues include aspartate 107 and aspartate 221.

Belongs to the glucose-1-phosphate thymidylyltransferase family. The cofactor is Mg(2+).

The catalysed reaction is dTTP + alpha-D-glucose 1-phosphate + H(+) = dTDP-alpha-D-glucose + diphosphate. Its pathway is antibiotic biosynthesis. In terms of biological role, involved in the biosynthesis of the two 2,6-deoxysugars, dTDP-L-oleandrose and dTDP-D-desosamine, attached to the macrolactone ring oleandolide to produce the aglycone antibiotic oleandomycin. Catalyzes the formation of dTDP-glucose from deoxythymidine triphosphate (dTTP) and glucose 1-phosphate. This chain is Glucose-1-phosphate thymidylyltransferase, found in Streptomyces antibioticus.